We begin with the raw amino-acid sequence, 463 residues long: Interleukin enhancer-binding factor 2 (463 aa).

Position 94 is an asymmetric dimethylarginine; alternate (Arg94). Residue Arg94 is modified to Omega-N-methylarginine; alternate. Residues 108–444 enclose the DZF domain; it reads RHILAYDWLA…PEKKEGEEEE (337 aa). An Omega-N-methylarginine modification is found at Arg145. Residue Lys166 forms a Glycyl lysine isopeptide (Lys-Gly) (interchain with G-Cter in ubiquitin) linkage. Ser173 and Ser189 each carry phosphoserine. Glycyl lysine isopeptide (Lys-Gly) (interchain with G-Cter in SUMO2) cross-links involve residues Lys259 and Lys437. Positions 424 to 463 are disordered; that stretch reads VTPSEKAYEKPPEKKEGEEEEENTEEPPQGEEEESMETQE. A compositionally biased stretch (basic and acidic residues) spans 429–440; the sequence is KAYEKPPEKKEG. The span at 441–463 shows a compositional bias: acidic residues; it reads EEEEENTEEPPQGEEEESMETQE. Thr461 carries the post-translational modification Phosphothreonine.

In terms of assembly, forms heterodimers with ILF3. ILF2-ILF3 heterodimers may also bind to PRKDC/XRCC7: this may stabilize the interaction of PRKDC/XRCC7 and the heterodimeric complex of G22P1/KU70 and XRCC5/KU80. Forms a complex with ILF3, YLPM1, KHDRBS1, RBMX, NCOA5 and PPP1CA. Identified in a IGF2BP1-dependent mRNP granule complex containing untranslated mRNAs. Interacts with IGF2BP1. Interacts with CRBN; this interaction promotes ubiquitination and subsequent degradation of ILF2. In terms of processing, ubiquitinated at Lys-166 by CRBN with polyubiquitin chains by the CUL4-RING E3 ligase (CRL4-CRBN) and then degraded by the proteasome.

Its subcellular location is the nucleus. It localises to the nucleolus. The protein resides in the cytoplasm. In terms of biological role, chromatin-interacting protein that forms a stable heterodimer with interleukin enhancer-binding factor 3/ILF3 and plays a role in several biological processes including transcription, innate immunity or cell growth. Essential for the efficient reshuttling of ILF3 (isoform 1 and isoform 2) into the nucleus. Together with ILF3, forms an RNA-binding complex that is required for mitotic progression and cytokinesis by regulating the expression of a cluster of mitotic genes. Mechanistically, competes with STAU1/STAU2-mediated mRNA decay. Plays also a role in the inhibition of various viruses including Japanese encephalitis virus or enterovirus 71. The polypeptide is Interleukin enhancer-binding factor 2 (Ilf2) (Rattus norvegicus (Rat)).